We begin with the raw amino-acid sequence, 512 residues long: Tabersonine 16-hydroxylase 2 (512 aa).

Position 1 (methionine 1) is a topological domain, lumenal. Residues 2-22 traverse the membrane as a helical segment; sequence ELYYFSTFAFLLFCFILAKTL. The Cytoplasmic portion of the chain corresponds to 23 to 512; the sequence is KKSGQSNLKL…YSASSLKGKY (490 aa). Cysteine 445 contacts heme.

Belongs to the cytochrome P450 family. The cofactor is heme. In terms of tissue distribution, expressed at low levels in roots, fruits, stems, flower buds and flowers, but highly expressed in young leaves. Detected in adaxial and abaxial epidermis cells.

The protein resides in the endoplasmic reticulum membrane. It carries out the reaction (-)-tabersonine + reduced [NADPH--hemoprotein reductase] + O2 = 16-hydroxytabersonine + oxidized [NADPH--hemoprotein reductase] + H2O + H(+). Its function is as follows. Involved in the foliar biosynthesis of vindoline, a precursor of vinblastine and vincristine. Hydroxylates specifically tabersonine, 2,3-dihydrotabersonine and 2,3-dihydro-3-hydroxytabersonine, but has no activity with naringenin, tryptamine, secologanin, strictosidine, ajmalicine, vindoline and catharanthine. This chain is Tabersonine 16-hydroxylase 2, found in Catharanthus roseus (Madagascar periwinkle).